The following is a 148-amino-acid chain: Phosphopantetheine adenylyltransferase (148 aa).

The protein belongs to the eukaryotic CoaD family.

The protein localises to the cytoplasm. It catalyses the reaction (R)-4'-phosphopantetheine + ATP + H(+) = 3'-dephospho-CoA + diphosphate. It participates in cofactor biosynthesis; coenzyme A biosynthesis. Reversibly transfers an adenylyl group from ATP to 4'-phosphopantetheine, yielding dephospho-CoA (dPCoA) and pyrophosphate. The protein is Phosphopantetheine adenylyltransferase of Archaeoglobus fulgidus (strain ATCC 49558 / DSM 4304 / JCM 9628 / NBRC 100126 / VC-16).